Here is a 695-residue protein sequence, read N- to C-terminus: DSC E3 ubiquitin ligase complex subunit 1 (695 aa).

An N-terminal signal peptide occupies residues 1–25; the sequence is MDRRRWVPSTPVVTLLLLFMLFAPA. The Lumenal segment spans residues 26 to 319; that stretch reads PRLPSRNGES…KGPRNFVLEN (294 aa). The chain crosses the membrane as a helical span at residues 320–340; the sequence is HLVRFSSLYIFIVLSQIFVLL. The Cytoplasmic segment spans residues 341-353; sequence RQMRINSPSHVQR. Residues 354-374 traverse the membrane as a helical segment; it reads LSFLTIAMQAGLDAYIAIFFL. At 375–382 the chain is on the lumenal side; that stretch reads STNAVIEK. Residues 383-403 form a helical membrane-spanning segment; it reads GYLPFVSVAFLSLVPSVMFTM. Topologically, residues 404–486 are cytoplasmic; it reads RYLALILRVQ…QRDWSAVCLR (83 aa). Residues 419–473 are disordered; that stretch reads PPAPRPVTNNSSNNNTNQSNASNENSPNAPSAANDNTETTTVNPPQEDDQPMTQH. A compositionally biased stretch (low complexity) spans 427 to 454; it reads NNSSNNNTNQSNASNENSPNAPSAANDN. The helical transmembrane segment at 487–507 threads the bilayer; the sequence is FYFIILVVCIASLYSAFWPVI. The Lumenal segment spans residues 508-509; sequence YR. The chain crosses the membrane as a helical span at residues 510–530; that stretch reads FYFISALIFTSYSFWIPQIIQ. At 531–540 the chain is on the cytoplasmic side; that stretch reads NVKQGTSRSF. The helical transmembrane segment at 541–561 threads the bilayer; it reads TWTYILGASVLRLYLPLAIFI. At 562-572 the chain is on the lumenal side; the sequence is DSELILGFPPK. The helical transmembrane segment at 573–593 threads the bilayer; sequence YFFALGLVLWMLFQVLVLLVQ. The Cytoplasmic portion of the chain corresponds to 594–695; sequence DTLGPRFFLP…PVCRCHLPAV (102 aa). An RING-type; atypical zinc finger spans residues 634 to 689; that stretch reads CPICMQPIELVSTGSTLNPASMMVRRNYMLTPCHHLYHRQCLLQWMETRSICPVCR.

As to quaternary structure, component of the DSC E3 ubiquitin ligase complex composed of dsc1, dsc2, dsc3 and dsc4.

It is found in the endoplasmic reticulum membrane. The protein resides in the golgi apparatus membrane. It carries out the reaction S-ubiquitinyl-[E2 ubiquitin-conjugating enzyme]-L-cysteine + [acceptor protein]-L-lysine = [E2 ubiquitin-conjugating enzyme]-L-cysteine + N(6)-ubiquitinyl-[acceptor protein]-L-lysine.. It functions in the pathway protein modification; protein ubiquitination. Functionally, catalytic component of the DSC E3 ubiquitin ligase complex which is required for the sre1 transcriptional activator proteolytic cleavage to release the soluble transcription factor from the membrane in low oxygen or sterol conditions. The complex also plays an important role in the multivesicular body (MVB) pathway and functions in a post-endoplasmic reticulum pathway for protein degradation. This is DSC E3 ubiquitin ligase complex subunit 1 (dsc1) from Schizosaccharomyces pombe (strain 972 / ATCC 24843) (Fission yeast).